We begin with the raw amino-acid sequence, 233 residues long: Eosinophil granule major basic protein 1 (233 aa).

An N-terminal signal peptide occupies residues 1 to 15 (MKLLLLLALLLGAVS). The propeptide at 16-114 (TRHLKVDTSS…VKFFSRPGYK (99 aa)) is acidic. A disordered region spans residues 24-96 (SSLQSLRGEE…SELDVSPEDI (73 aa)). The segment covering 42-57 (AEGATREATAGALMPL) has biased composition (low complexity). A compositionally biased stretch (acidic residues) spans 58–93 (PEEEEMEGASGSEDDPEEEEEEEEEVEFSSELDVSP). Residues 132–233 (WVCQRCYRGN…GKRRPFVCTY (102 aa)) enclose the C-type lectin domain. 2 disulfides stabilise this stretch: cysteine 134/cysteine 231 and cysteine 208/cysteine 223.

In terms of processing, nitrated.

It localises to the cytoplasmic granule. Functionally, MBP may play some important roles in the allergic reactions and inflammations, since MBP is capable of releasing histamine from mast cells and damaging the epithelial cells of bronchial tubes. Antiparasitic and antibiotic. In Cavia porcellus (Guinea pig), this protein is Eosinophil granule major basic protein 1 (MBP1).